A 101-amino-acid polypeptide reads, in one-letter code: Small ribosomal subunit protein bS18c (101 aa).

Belongs to the bacterial ribosomal protein bS18 family. Part of the 30S ribosomal subunit.

The protein localises to the plastid. The protein resides in the chloroplast. This Panax ginseng (Korean ginseng) protein is Small ribosomal subunit protein bS18c.